The following is a 447-amino-acid chain: tRNA-2-methylthio-N(6)-dimethylallyladenosine synthase (447 aa).

The region spanning 8–126 is the MTTase N-terminal domain; that stretch reads KKVVTLAYGC…FQRLLEEAEE (119 aa). Residues Cys-17, Cys-53, Cys-87, Cys-162, Cys-166, and Cys-169 each contribute to the [4Fe-4S] cluster site. The Radical SAM core domain occupies 148–378; the sequence is AKGKLKAYVN…ITVQNAQSLA (231 aa). The TRAM domain occupies 381-444; that stretch reads QEMIGKTCEV…SWTLFGECRA (64 aa).

This sequence belongs to the methylthiotransferase family. MiaB subfamily. In terms of assembly, monomer. It depends on [4Fe-4S] cluster as a cofactor.

It is found in the cytoplasm. It catalyses the reaction N(6)-dimethylallyladenosine(37) in tRNA + (sulfur carrier)-SH + AH2 + 2 S-adenosyl-L-methionine = 2-methylsulfanyl-N(6)-dimethylallyladenosine(37) in tRNA + (sulfur carrier)-H + 5'-deoxyadenosine + L-methionine + A + S-adenosyl-L-homocysteine + 2 H(+). Catalyzes the methylthiolation of N6-(dimethylallyl)adenosine (i(6)A), leading to the formation of 2-methylthio-N6-(dimethylallyl)adenosine (ms(2)i(6)A) at position 37 in tRNAs that read codons beginning with uridine. This Desulfitobacterium hafniense (strain Y51) protein is tRNA-2-methylthio-N(6)-dimethylallyladenosine synthase.